The chain runs to 206 residues: Small ribosomal subunit protein uS4 (206 aa).

Positions 96-156 constitute an S4 RNA-binding domain; sequence GRLDNVVYRM…EKAKKQSRVK (61 aa).

Belongs to the universal ribosomal protein uS4 family. In terms of assembly, part of the 30S ribosomal subunit. Contacts protein S5. The interaction surface between S4 and S5 is involved in control of translational fidelity.

Functionally, one of the primary rRNA binding proteins, it binds directly to 16S rRNA where it nucleates assembly of the body of the 30S subunit. Its function is as follows. With S5 and S12 plays an important role in translational accuracy. The protein is Small ribosomal subunit protein uS4 of Enterobacter sp. (strain 638).